Reading from the N-terminus, the 124-residue chain is Ribonuclease pancreatic (124 aa).

Positions 1-13 are enriched in basic and acidic residues; sequence KESAAAKFERQHM. Positions 1–23 are disordered; that stretch reads KESAAAKFERQHMDPSASSISSS. Residues Lys-7 and Arg-10 each contribute to the substrate site. Residue His-12 is the Proton acceptor of the active site. 4 disulfides stabilise this stretch: Cys-26–Cys-84, Cys-40–Cys-95, Cys-58–Cys-110, and Cys-65–Cys-72. N-linked (GlcNAc...) asparagine glycosylation is present at Asn-34. Residues 41–45, Lys-66, and Arg-85 contribute to the substrate site; that span reads KPVNT. The active-site Proton donor is His-119.

The protein belongs to the pancreatic ribonuclease family. Monomer. Interacts with and forms tight 1:1 complexes with RNH1. Dimerization of two such complexes may occur. Interaction with RNH1 inhibits this protein. Pancreas.

Its subcellular location is the secreted. The enzyme catalyses an [RNA] containing cytidine + H2O = an [RNA]-3'-cytidine-3'-phosphate + a 5'-hydroxy-ribonucleotide-3'-[RNA].. The catalysed reaction is an [RNA] containing uridine + H2O = an [RNA]-3'-uridine-3'-phosphate + a 5'-hydroxy-ribonucleotide-3'-[RNA].. Its function is as follows. Endonuclease that catalyzes the cleavage of RNA on the 3' side of pyrimidine nucleotides. Acts on single-stranded and double-stranded RNA. The chain is Ribonuclease pancreatic (RNASE1) from Alces alces alces (European moose).